The following is a 36-amino-acid chain: Peptide POLARIS (36 aa).

This sequence belongs to the POLARIS peptide family. In terms of tissue distribution, mostly expressed in the embryonic root from the heart stage and in the seedling primary and lateral root tips, especially in the columella initials and lateral root cap. Also detectable in aerial parts of the seedling, sepals and leaves, principally in vascular tissues of the lamina and petiole.

Its function is as follows. Required for correct root growth and vascular development, probably by modulating both cell division rate in meristems and cell elongation in roots. Negative regulator of the ethylene signaling pathway that modulates microtubule cytoskeleton dynamics and auxin transport and homeostasis, and possibly cytokinin signaling, thus influencing root growth and lateral root development. The sequence is that of Peptide POLARIS (PLS) from Arabidopsis thaliana (Mouse-ear cress).